The primary structure comprises 57 residues: Probable antitoxin MazE1 (57 aa).

Forms a complex with cognate toxin MazF1.

Its function is as follows. Antitoxin component of a type II toxin-antitoxin (TA) system. In Mycobacterium tuberculosis (strain ATCC 25618 / H37Rv), this protein is Probable antitoxin MazE1 (mazE1).